A 180-amino-acid polypeptide reads, in one-letter code: Major urinary protein 6 (180 aa).

An N-terminal signal peptide occupies residues 1 to 18 (MKMLLLLCLGLTLVCVHA). Cys82 and Cys175 form a disulfide bridge.

The protein belongs to the calycin superfamily. Lipocalin family. In terms of tissue distribution, abundant in the urine of adult male mice but absent from that of females.

It is found in the secreted. In terms of biological role, binds pheromones that are released from drying urine of males. These pheromones affect the sexual behavior of females. The protein is Major urinary protein 6 (Mup6) of Mus musculus (Mouse).